Consider the following 78-residue polypeptide: DNA-directed RNA polymerase subunit omega (78 aa).

The protein belongs to the RNA polymerase subunit omega family. As to quaternary structure, in cyanobacteria the RNAP catalytic core is composed of 2 alpha, 1 beta, 1 beta', 1 gamma and 1 omega subunit. When a sigma factor is associated with the core the holoenzyme is formed, which can initiate transcription.

The catalysed reaction is RNA(n) + a ribonucleoside 5'-triphosphate = RNA(n+1) + diphosphate. Functionally, promotes RNA polymerase assembly. Latches the N- and C-terminal regions of the beta' subunit thereby facilitating its interaction with the beta and alpha subunits. In Prochlorococcus marinus (strain MIT 9515), this protein is DNA-directed RNA polymerase subunit omega.